Reading from the N-terminus, the 694-residue chain is N,N-dimethylglycine/sarcosine dehydrogenase (694 aa).

It in the N-terminal section; belongs to the NADH:flavin oxidoreductase/NADH oxidase family. Monomer. The purified enzyme exists in the form of a monomer, dimer or polymer under non-denaturing conditions, but only the monomeric protein exhibits enzyme activity. FAD serves as cofactor. Requires NAD(+) as cofactor. It depends on NADP(+) as a cofactor.

The protein localises to the cytoplasm. It catalyses the reaction oxidized 2[4Fe-4S]-[ferredoxin] + N,N-dimethylglycine + H2O = reduced 2[4Fe-4S]-[ferredoxin] + sarcosine + formaldehyde + 2 H(+). The catalysed reaction is oxidized 2[4Fe-4S]-[ferredoxin] + sarcosine + H2O = reduced 2[4Fe-4S]-[ferredoxin] + formaldehyde + glycine + 2 H(+). Ca(2+) increases the activity by 12%, while the other metal ions tested have no or slightly inhibitory effects. The chelating agent EDTA inhibits the activity by 33%. Its function is as follows. Involved in degradation of glycine betaine. Catalyzes the demethylation of both N,N-dimethylglycine (DMG) and sarcosine, releasing formaldehyde and forming glycine as the final product. Does not show activity toward trimethylamine (TMA), histamine, glycine betaine (GB) or choline. The C-N bond in DMG is probably oxidized by removal of a hydride equivalent to form a labile imine intermediate, which is then spontaneously hydrolyzed in the presence of water, producing sarcosine and formaldehyde. The two protons subtracted from DMG are transferred to the non-covalently bound FAD, resulting in the reduced form of FAD, which is subsequently reoxidized by coupling with reduction of the enzyme-bound NAD(P)(+). Regeneration of NAD(P)(+) is achieved by electron transfer to the [4Fe-4S] cluster in the probable membrane-anchored ferredoxin csal_0991. The chain is N,N-dimethylglycine/sarcosine dehydrogenase from Chromohalobacter salexigens (strain ATCC BAA-138 / DSM 3043 / CIP 106854 / NCIMB 13768 / 1H11).